A 489-amino-acid chain; its full sequence is ERO1-like protein alpha (489 aa).

The signal sequence occupies residues 1–20 (METCVLLLGLFLTSVHVTTA). 8 disulfides stabilise this stretch: Cys27–Cys40, Cys29–Cys38, Cys77–Cys382, Cys86–Cys91, Cys86–Cys123, Cys91–Cys96, Cys200–Cys232, and Cys385–Cys388. FAD-binding residues include Arg179, Thr181, and Trp192. FAD is bound by residues Ser243 and His246. An N-linked (GlcNAc...) asparagine glycan is attached at Asn271. FAD is bound by residues Arg278 and Arg291. N-linked (GlcNAc...) asparagine glycosylation is present at Asn375.

Belongs to the EROs family. In terms of assembly, predominantly monomer. May function both as a monomer and a homodimer. It depends on FAD as a cofactor. In terms of processing, the Cys-86/Cys-91 and Cys-385/Cys-388 disulfide bonds constitute the redox-active center. The Cys-86/Cys-91 disulfide bond may accept electron from protein disulfide isomerase (PDI) and funnel them to the active site disulfide Cys-385/Cys-388.

It is found in the endoplasmic reticulum membrane. Enzyme activity is tightly regulated to prevent the accumulation of reactive oxygen species in the endoplasmic reticulum. Reversibly down-regulated by the formation of disulfide bonds between the active site Cys-86 and Cys-123, and between Cys-91 and Cys-96. Glutathione may be required to regulate its activity in the endoplasmic reticulum. Its function is as follows. Oxidoreductase involved in disulfide bond formation in the endoplasmic reticulum. Efficiently reoxidizes P4HB/PDI, the enzyme catalyzing protein disulfide formation, in order to allow P4HB to sustain additional rounds of disulfide formation. Following P4HB reoxidation, passes its electrons to molecular oxygen via FAD, leading to the production of reactive oxygen species (ROS) in the cell. Required for the folding of immunoglobulins. The protein is ERO1-like protein alpha of Danio rerio (Zebrafish).